We begin with the raw amino-acid sequence, 493 residues long: Cytochrome P450 monooxygenase olcG (493 aa).

A helical transmembrane segment spans residues 15–35 (GILATGALVIFVALFLATFQF). Cysteine 429 is a binding site for heme.

This sequence belongs to the cytochrome P450 family. Heme is required as a cofactor.

Its subcellular location is the membrane. It functions in the pathway secondary metabolite biosynthesis; terpenoid biosynthesis. Functionally, cytochrome P450 monooxygenase; part of the gene cluster that mediates the biosynthesis of 15-deoxyoxalicine B. The first step of the pathway is the synthesis of nicotinyl-CoA from nicotinic acid by the nicotinic acid-CoA ligase olcI. Nicotinyl-CoA is then a substrate of polyketide synthase olcA to produce 4-hydroxy-6-(3-pyridinyl)-2H-pyran-2-one (HPPO) which is further prenylated by the polyprenyl transferase olcH to yield geranylgeranyl-HPPO. Geranylgeranyl pyrophosphate is provided by the cluster-specific geranylgeranyl pyrophosphate synthase olcC. The FAD-dependent monooxygenase olcE catalyzes the epoxidation of geranylgeranyl-HPPO and the terpene cyclase olcD catalyzes the cyclization of the terpenoid component, resulting in the formation of the tricyclic terpene moiety seen in predecaturin E. The cytochrome P450 monooxygenase then catalyzes the allylic oxidation of predecaturin E, which is followed by spirocylization with concomitant loss of one molecule of water to form decaturin E. Decaturin E is the substrate of the cytochrome P450 monooxygenase olcJ which hydroxylates it at the C-29 position to form decaturin F. The short-chain dehydrogenase/reductase olcF may catalyze the oxidation of decaturin F to generate the 29-hydroxyl-27-one intermediate, and subsequent hemiacetal formation probably leads to the formation of decaturin C. The dioxygenase olcK may be a peroxisomal enzyme that catalyzes the hydroxylation of decaturin C into decaturin A once decaturin C is shuttled into the peroxisome by the MFS transporter olcL. Finally the cytochrome P450 monooxygenase olcB catalyzes the oxidative rearrangement to yield 15-deoxyoxalicine B. In the absence of olcJ, decaturin E may be shunted to a pathway in which it is oxidized to a ketone, possibly by olcF, to form decaturin D, which undergoes further allylic oxidation to yield decaturin G. Moreover, in the absence of oclK or oclL, oclB can convert decaturin C into 15-deoxyoxalicine A. This is Cytochrome P450 monooxygenase olcG from Penicillium canescens.